Consider the following 95-residue polypeptide: Costars family protein At4g33640 (95 aa).

Methionine 1 carries the post-translational modification N-acetylmethionine.

Belongs to the costars family.

This is Costars family protein At4g33640 from Arabidopsis thaliana (Mouse-ear cress).